The sequence spans 191 residues: Thymidine kinase (191 aa).

ATP-binding positions include 9-16 (GTMNSGKT) and 85-88 (DEAQ). Glu-86 (proton acceptor) is an active-site residue. The Zn(2+) site is built by Cys-143, Cys-146, Cys-180, and His-183.

The protein belongs to the thymidine kinase family. In terms of assembly, homotetramer.

Its subcellular location is the cytoplasm. The enzyme catalyses thymidine + ATP = dTMP + ADP + H(+). The polypeptide is Thymidine kinase (Streptococcus gordonii (strain Challis / ATCC 35105 / BCRC 15272 / CH1 / DL1 / V288)).